The sequence spans 347 residues: UDP-N-acetylenolpyruvoylglucosamine reductase (347 aa).

Positions 15 to 187 constitute an FAD-binding PCMH-type domain; it reads FGIEQTCSYL…TAIGLKLPKR (173 aa). Arg-163 is an active-site residue. The Proton donor role is filled by Ser-233. The active site involves Glu-328.

The protein belongs to the MurB family. The cofactor is FAD.

The protein resides in the cytoplasm. It catalyses the reaction UDP-N-acetyl-alpha-D-muramate + NADP(+) = UDP-N-acetyl-3-O-(1-carboxyvinyl)-alpha-D-glucosamine + NADPH + H(+). Its pathway is cell wall biogenesis; peptidoglycan biosynthesis. Its function is as follows. Cell wall formation. This chain is UDP-N-acetylenolpyruvoylglucosamine reductase, found in Vibrio parahaemolyticus serotype O3:K6 (strain RIMD 2210633).